A 77-amino-acid chain; its full sequence is U8-lycotoxin-Ls1p (77 aa).

Positions Met1–Ala20 are cleaved as a signal peptide. Residues Gln21 to Lys26 constitute a propeptide that is removed on maturation.

Belongs to the neurotoxin 19 (CSTX) family. 08 (U8-Lctx) subfamily. Post-translationally, contains 4 disulfide bonds. In terms of tissue distribution, expressed by the venom gland.

The protein localises to the secreted. This Lycosa singoriensis (Wolf spider) protein is U8-lycotoxin-Ls1p.